Reading from the N-terminus, the 4870-residue chain is Malformin synthetase mlfA (4870 aa).

The interval 106 to 497 (ERRAANRPHS…CGRADTQVKL (392 aa)) is adenylation 1. The Carrier 1 domain occupies 635-711 (LGLSQLEQEI…EASSLAEVQE (77 aa)). O-(pantetheine 4'-phosphoryl)serine is present on serine 672. The condensation 1 stretch occupies residues 749 to 1133 (EDVFPCTTMQ…ALNTLTLLQA (385 aa)). Residues 1161–1550 (DRWVTRQPES…GRKDTQVKLR (390 aa)) are adenylation 2. The Carrier 2 domain maps to 1688–1765 (TASSKLELTL…QLAAILGEAT (78 aa)). Position 1725 is an O-(pantetheine 4'-phosphoryl)serine (serine 1725). Disordered regions lie at residues 1764–1794 (ATGQ…NDGV) and 1829–1859 (GSSS…VSPV). Composition is skewed to low complexity over residues 1769-1792 (ESSA…STND) and 1830-1846 (SSSC…SSSS). The condensation 2 stretch occupies residues 1898 to 2313 (EDIYPATALQ…GVSYRDKQTL (416 aa)). The tract at residues 2336 to 2728 (VRTPHAPAVF…IGRRDGQLKL (393 aa)) is adenylation 3. The region spanning 2864-2940 (RPATAQEREM…QLMRHLSANG (77 aa)) is the Carrier 3 domain. O-(pantetheine 4'-phosphoryl)serine is present on serine 2901. 2 condensation regions span residues 2957-3422 (WVPL…TYDQ) and 3443-3862 (DIYP…EQLV). Positions 3887-4277 (HSSREAACAW…VGRKDNQIKF (391 aa)) are adenylation 4. The Carrier 4 domain maps to 4411–4487 (MPFTAAECKM…DLAYRTANLV (77 aa)). The residue at position 4448 (serine 4448) is an O-(pantetheine 4'-phosphoryl)serine. The interval 4524-4837 (EVLPTTSFQR…LQTIVQHQNN (314 aa)) is condensation 5.

This sequence belongs to the NRP synthetase family.

It participates in secondary metabolite biosynthesis. Its function is as follows. Nonribosomal peptide synthetase; part of the gene cluster that mediates the biosynthesis of malformins, cyclic pentapeptides with a disulfide bond between 2 consecutive cysteins, that show potential anti-tumor as well as antimalarial and antitrypanosomal properties. The nonribosomal peptide synthetase mlfA is responsible of the formation of the cyclic pentapeptide. The malformin biosynthesis clusters in malformin-producing fungi also contain enzymes involved in the formation of the disulfide bond between the two consecutive cysteins within malformins, in addition to additional tailoring enzymes such as methyltransferases or oxidoreductases. They are also composed of up to 4 major facilitator superfamily transporters, and transcription factors probably involved in the regulation of the expression of those clusters. The chain is Malformin synthetase mlfA from Aspergillus niger (strain ATCC 1015 / CBS 113.46 / FGSC A1144 / LSHB Ac4 / NCTC 3858a / NRRL 328 / USDA 3528.7).